We begin with the raw amino-acid sequence, 100 residues long: Eukaryotic translation initiation factor 4E-binding protein 3 (100 aa).

Positions 40 to 46 (YDRKFLL) match the YXXXXLphi motif motif. The segment at 81–100 (LKEQETEEEIPDDAQFEMDI) is disordered. Positions 85–100 (ETEEEIPDDAQFEMDI) are enriched in acidic residues. The TOS motif motif lies at 96–100 (FEMDI).

It belongs to the eIF4E-binding protein family. Interacts with EIF4E. Interacts with RPA2 (in unphosphorylated form via N-terminus); the interaction enhances EIF4EBP3-mediated inhibition of EIF4E-mediated mRNA nuclear export. Phosphorylated. In terms of tissue distribution, expression is highest in skeletal muscle, heart, kidney, and pancreas, whereas there is very little expression in brain and thymus.

The protein resides in the cytoplasm. The protein localises to the nucleus. Its function is as follows. Repressor of translation initiation that regulates EIF4E activity by preventing its assembly into the eIF4F complex: the hypophosphorylated form competes with EIF4G1/EIF4G3 and strongly binds to EIF4E, leading to repression of translation. In contrast, the hyperphosphorylated form dissociates from EIF4E, allowing interaction between EIF4G1/EIF4G3 and EIF4E, leading to initiation of translation. Inhibits EIF4E-mediated mRNA nuclear export. This chain is Eukaryotic translation initiation factor 4E-binding protein 3 (EIF4EBP3), found in Homo sapiens (Human).